A 171-amino-acid chain; its full sequence is Ribosome maturation factor RimP (171 aa).

The protein belongs to the RimP family.

The protein localises to the cytoplasm. Its function is as follows. Required for maturation of 30S ribosomal subunits. In Oleidesulfovibrio alaskensis (strain ATCC BAA-1058 / DSM 17464 / G20) (Desulfovibrio alaskensis), this protein is Ribosome maturation factor RimP.